The chain runs to 419 residues: Caspase-12 (419 aa).

The 92-residue stretch at Met-1 to Glu-92 folds into the CARD domain. Position 85 is a phosphoserine (Ser-85). The tract at residues Phe-88 to Glu-113 is disordered. Catalysis depends on residues His-250 and Cys-298.

This sequence belongs to the peptidase C14A family. As to quaternary structure, heterotetramer that consists of two anti-parallel arranged heterodimers, each one formed by two subunits (Potential). Interacts with TRAF2 under resting conditions; this interaction is reduced in ER stress conditions. As to expression, mainly expressed in skeletal muscle and lung.

Functionally, involved in the activation cascade of caspases responsible for apoptosis execution. This Mus musculus (Mouse) protein is Caspase-12 (Casp12).